Here is a 436-residue protein sequence, read N- to C-terminus: MSTGFFGNLQPISYEGPQSDNPLAFRHYNPDEVVLGKRLEDHLRFAVCYWHTFVWPGGDPFGGQTFERPWFGDTMERARLKADVAFELFEILGVPFFTFHDADVRPEGASYSESVARLNDIADYIAAKMEKTGVRLLWGTANLFSHRRFMAGAATNPDPDVFAYAAATVKACIDVTKRLNGENYVLWGGREGYETLLNTDLGRELDQLGRFLSMVVDYKHRIGFKGAILIEPKPQEPTKHQYDFDVGTVYGFLKRYGLEDEVKVNIEQGHALLAGHSFEHELALAATLGIFGSIDMNRNDYQSGWDTDQFPNNAPEAALAYYYILQAGGFTTGGTNFDAKLRRQSLDPEDLVAAHIGGMDICAQGLKAAARMIEDKALSGPLEERYSGWNATEAQAMLKGERSLEAIAERVARENLDPKPRSGRQEKLENIINRYV.

Catalysis depends on residues H100 and D103. The Mg(2+) site is built by E231, E267, H270, D295, D306, D308, and D338.

This sequence belongs to the xylose isomerase family. As to quaternary structure, homotetramer. Mg(2+) serves as cofactor.

It localises to the cytoplasm. It catalyses the reaction alpha-D-xylose = alpha-D-xylulofuranose. This is Xylose isomerase from Chelativorans sp. (strain BNC1).